The following is a 107-amino-acid chain: U1-lycotoxin-Ls1d (107 aa).

The first 20 residues, methionine 1 to serine 20, serve as a signal peptide directing secretion. Positions glutamate 21–arginine 41 are excised as a propeptide. Disulfide bonds link cysteine 44–cysteine 59, cysteine 51–cysteine 68, cysteine 58–cysteine 86, and cysteine 70–cysteine 84.

The protein belongs to the neurotoxin 19 (CSTX) family. 04 (U1-Lctx) subfamily. Expressed by the venom gland.

The protein resides in the secreted. The protein is U1-lycotoxin-Ls1d of Lycosa singoriensis (Wolf spider).